The chain runs to 399 residues: Succinate--CoA ligase [ADP-forming] subunit beta (399 aa).

The region spanning 9-254 is the ATP-grasp domain; sequence KAVLQPFGVS…ETEEDAKEIE (246 aa). ATP is bound by residues Lys46, 53–55, Glu109, Ser112, and Glu117; that span reads GRG. Residues Asn209 and Asp223 each contribute to the Mg(2+) site. Substrate is bound by residues Asn274 and 331–333; that span reads GIM.

The protein belongs to the succinate/malate CoA ligase beta subunit family. In terms of assembly, heterotetramer of two alpha and two beta subunits. The cofactor is Mg(2+).

It carries out the reaction succinate + ATP + CoA = succinyl-CoA + ADP + phosphate. The catalysed reaction is GTP + succinate + CoA = succinyl-CoA + GDP + phosphate. It participates in carbohydrate metabolism; tricarboxylic acid cycle; succinate from succinyl-CoA (ligase route): step 1/1. Succinyl-CoA synthetase functions in the citric acid cycle (TCA), coupling the hydrolysis of succinyl-CoA to the synthesis of either ATP or GTP and thus represents the only step of substrate-level phosphorylation in the TCA. The beta subunit provides nucleotide specificity of the enzyme and binds the substrate succinate, while the binding sites for coenzyme A and phosphate are found in the alpha subunit. In Rhodopseudomonas palustris (strain BisB18), this protein is Succinate--CoA ligase [ADP-forming] subunit beta.